The sequence spans 105 residues: Large ribosomal subunit protein uL24 (105 aa).

Belongs to the universal ribosomal protein uL24 family. As to quaternary structure, part of the 50S ribosomal subunit.

One of two assembly initiator proteins, it binds directly to the 5'-end of the 23S rRNA, where it nucleates assembly of the 50S subunit. In terms of biological role, one of the proteins that surrounds the polypeptide exit tunnel on the outside of the subunit. This chain is Large ribosomal subunit protein uL24, found in Rhizorhabdus wittichii (strain DSM 6014 / CCUG 31198 / JCM 15750 / NBRC 105917 / EY 4224 / RW1) (Sphingomonas wittichii).